The primary structure comprises 568 residues: Fumarate hydratase 2 (568 aa).

A [4Fe-4S] cluster-binding site is contributed by Cys-133. Residues 134–135 (QD), Arg-173, Gly-216, and 219–225 (NKAYLYQ) contribute to the (S)-malate site. [4Fe-4S] cluster is bound by residues Cys-252 and Cys-346. Residues Arg-421, 467 to 471 (TTAGR), and Lys-491 each bind (S)-malate.

It belongs to the class-I fumarase family. In terms of assembly, homodimer. The cofactor is [4Fe-4S] cluster.

The protein localises to the cytoplasm. It is found in the cytosol. It carries out the reaction (S)-malate = fumarate + H2O. With respect to regulation, specifically and competitively inhibited by 2-thiomalate, which coordinates with the catalytic [4Fe-4S] cluster. Weakly inhibited by malonate. Functionally, cytosolic fumarate hydratase that catalyzes the reversible hydration of fumarate to (S)-malate. In Leishmania major, this protein is Fumarate hydratase 2.